The following is a 161-amino-acid chain: Lipoprotein signal peptidase (161 aa).

A run of 2 helical transmembrane segments spans residues 64–84 (YRVP…AWFY) and 92–114 (VLGR…DRVR). Active-site residues include D120 and D138. A helical membrane pass occupies residues 131 to 151 (WPAFNVADSAICVGVGMLLLA).

It belongs to the peptidase A8 family.

The protein resides in the cell inner membrane. The catalysed reaction is Release of signal peptides from bacterial membrane prolipoproteins. Hydrolyzes -Xaa-Yaa-Zaa-|-(S,diacylglyceryl)Cys-, in which Xaa is hydrophobic (preferably Leu), and Yaa (Ala or Ser) and Zaa (Gly or Ala) have small, neutral side chains.. It participates in protein modification; lipoprotein biosynthesis (signal peptide cleavage). Functionally, this protein specifically catalyzes the removal of signal peptides from prolipoproteins. This chain is Lipoprotein signal peptidase, found in Syntrophotalea carbinolica (strain DSM 2380 / NBRC 103641 / GraBd1) (Pelobacter carbinolicus).